Reading from the N-terminus, the 72-residue chain is Large ribosomal subunit protein uL29 (72 aa).

The protein belongs to the universal ribosomal protein uL29 family. In terms of assembly, part of the 50S ribosomal subunit.

The chain is Large ribosomal subunit protein uL29 from Pyrococcus furiosus (strain ATCC 43587 / DSM 3638 / JCM 8422 / Vc1).